The primary structure comprises 127 residues: Small ribosomal subunit protein uS13 (127 aa).

The segment at 99 to 127 (RGQRTRTNARTRRGRRGQAIGIKKKTLKK) is disordered.

Belongs to the universal ribosomal protein uS13 family. As to quaternary structure, part of the 30S ribosomal subunit. Forms a loose heterodimer with protein S19. Forms two bridges to the 50S subunit in the 70S ribosome.

Its function is as follows. Located at the top of the head of the 30S subunit, it contacts several helices of the 16S rRNA. In the 70S ribosome it contacts the 23S rRNA (bridge B1a) and protein L5 of the 50S subunit (bridge B1b), connecting the 2 subunits; these bridges are implicated in subunit movement. Contacts the tRNAs in the A and P-sites. In Roseiflexus castenholzii (strain DSM 13941 / HLO8), this protein is Small ribosomal subunit protein uS13.